The chain runs to 299 residues: Transcription factor MYB17 (299 aa).

HTH myb-type domains follow at residues 9-61 (KIGL…TNYL) and 62-116 (RPDI…KKRL). DNA-binding regions (H-T-H motif) lie at residues 37–61 (WRTL…TNYL) and 89–112 (WAAI…NTHL).

As to quaternary structure, interacts with LFY. As to expression, expressed in the shoot apex, young flower buds, developing carpels and siliques. Expressed in floral meristem, initiating floral primordia and developing flowers.

It localises to the nucleus. Functionally, transcription factor that may play a role in flower development by repressing ANT. Regulates the transition of meristem identity from vegetative growth to flowering. Acts downstream of LFY and upstream of AP1. Directly activates AP1 to promote floral fate. Together with LFY and AP1 may constitute a regulatory network that contributes to an abrupt and robust meristem identity transition. This Arabidopsis thaliana (Mouse-ear cress) protein is Transcription factor MYB17.